Reading from the N-terminus, the 340-residue chain is Uroporphyrinogen decarboxylase (340 aa).

Residues 21–25 (RQAGR), Asp71, Tyr147, Ser202, and His315 contribute to the substrate site.

It belongs to the uroporphyrinogen decarboxylase family. As to quaternary structure, homodimer.

The protein resides in the cytoplasm. The enzyme catalyses uroporphyrinogen III + 4 H(+) = coproporphyrinogen III + 4 CO2. The protein operates within porphyrin-containing compound metabolism; protoporphyrin-IX biosynthesis; coproporphyrinogen-III from 5-aminolevulinate: step 4/4. Its function is as follows. Catalyzes the decarboxylation of four acetate groups of uroporphyrinogen-III to yield coproporphyrinogen-III. The polypeptide is Uroporphyrinogen decarboxylase (Nautilia profundicola (strain ATCC BAA-1463 / DSM 18972 / AmH)).